The following is a 423-amino-acid chain: Maintenance of mitochondrial morphology protein 1 (423 aa).

At 1–15 (MWLDDVASELSFTQG) the chain is on the lumenal side. The chain crosses the membrane as a helical span at residues 16 to 36 (LLLGQLSIVILIGAFIKFFIF). The Cytoplasmic segment spans residues 37–423 (GDPPSPDVSA…PGSMPGLSMA (387 aa)). The SMP-LTD domain occupies 110–322 (QPESLDWFNV…EPRFQQIELP (213 aa)). Disordered stretches follow at residues 327–370 (RKKN…EAET) and 394–423 (SEEG…LSMA). A compositionally biased stretch (basic and acidic residues) spans 350–367 (RSRDVERDLREEARKEVE).

This sequence belongs to the MMM1 family. In terms of assembly, homodimer. Component of the ER-mitochondria encounter structure (ERMES) or MDM complex, composed of mmm1, mdm10, mdm12 and mdm34. A mmm1 homodimer associates with one molecule of mdm12 on each side in a pairwise head-to-tail manner, and the SMP-LTD domains of mmm1 and mdm12 generate a continuous hydrophobic tunnel for phospholipid trafficking.

It localises to the endoplasmic reticulum membrane. Its function is as follows. Component of the ERMES/MDM complex, which serves as a molecular tether to connect the endoplasmic reticulum (ER) and mitochondria. Components of this complex are involved in the control of mitochondrial shape and protein biogenesis, and function in nonvesicular lipid trafficking between the ER and mitochondria. The mdm12-mmm1 subcomplex functions in the major beta-barrel assembly pathway that is responsible for biogenesis of all outer membrane beta-barrel proteins, and acts in a late step after the SAM complex. The mdm10-mdm12-mmm1 subcomplex further acts in the TOM40-specific pathway after the action of the mdm12-mmm1 complex. Essential for establishing and maintaining the structure of mitochondria and maintenance of mtDNA nucleoids. In Sclerotinia sclerotiorum (strain ATCC 18683 / 1980 / Ss-1) (White mold), this protein is Maintenance of mitochondrial morphology protein 1.